The following is a 193-amino-acid chain: DNA damage-inducible transcript 4-like protein (193 aa).

The protein belongs to the DDIT4 family. As to expression, expressed in heart, skeletal muscle and testis.

Its subcellular location is the cytoplasm. Its function is as follows. Inhibits cell growth by regulating the TOR signaling pathway upstream of the TSC1-TSC2 complex and downstream of AKT1. This chain is DNA damage-inducible transcript 4-like protein (Ddit4l), found in Rattus norvegicus (Rat).